The chain runs to 177 residues: Cell division protein ZapC (177 aa).

This sequence belongs to the ZapC family. Interacts directly with FtsZ.

Its subcellular location is the cytoplasm. Functionally, contributes to the efficiency of the cell division process by stabilizing the polymeric form of the cell division protein FtsZ. Acts by promoting interactions between FtsZ protofilaments and suppressing the GTPase activity of FtsZ. In Shewanella oneidensis (strain ATCC 700550 / JCM 31522 / CIP 106686 / LMG 19005 / NCIMB 14063 / MR-1), this protein is Cell division protein ZapC.